The following is a 277-amino-acid chain: Undecaprenyl-diphosphatase 1 (277 aa).

Helical transmembrane passes span 46–66 (VVGF…VYFF), 95–115 (WWVI…KSLI), 119–139 (LASL…MWAA), 165–185 (ILAL…TALI), 191–211 (VAAT…AGLY), 216–236 (ALGT…SFVV), and 256–276 (FVIY…TGVL).

This sequence belongs to the UppP family.

The protein localises to the cell membrane. It catalyses the reaction di-trans,octa-cis-undecaprenyl diphosphate + H2O = di-trans,octa-cis-undecaprenyl phosphate + phosphate + H(+). Its function is as follows. Catalyzes the dephosphorylation of undecaprenyl diphosphate (UPP). Confers resistance to bacitracin. The sequence is that of Undecaprenyl-diphosphatase 1 from Streptomyces avermitilis (strain ATCC 31267 / DSM 46492 / JCM 5070 / NBRC 14893 / NCIMB 12804 / NRRL 8165 / MA-4680).